Here is a 133-residue protein sequence, read N- to C-terminus: Small ribosomal subunit protein uS8 (133 aa).

This sequence belongs to the universal ribosomal protein uS8 family. In terms of assembly, part of the 30S ribosomal subunit. Contacts proteins S5 and S12.

Functionally, one of the primary rRNA binding proteins, it binds directly to 16S rRNA central domain where it helps coordinate assembly of the platform of the 30S subunit. The polypeptide is Small ribosomal subunit protein uS8 (Micrococcus luteus (Micrococcus lysodeikticus)).